A 147-amino-acid polypeptide reads, in one-letter code: Large ribosomal subunit protein bL9 (147 aa).

This sequence belongs to the bacterial ribosomal protein bL9 family.

Binds to the 23S rRNA. The chain is Large ribosomal subunit protein bL9 from Clostridium acetobutylicum (strain ATCC 824 / DSM 792 / JCM 1419 / IAM 19013 / LMG 5710 / NBRC 13948 / NRRL B-527 / VKM B-1787 / 2291 / W).